The sequence spans 466 residues: Asparagine--tRNA ligase (466 aa).

It belongs to the class-II aminoacyl-tRNA synthetase family. As to quaternary structure, homodimer.

The protein localises to the cytoplasm. The catalysed reaction is tRNA(Asn) + L-asparagine + ATP = L-asparaginyl-tRNA(Asn) + AMP + diphosphate + H(+). The sequence is that of Asparagine--tRNA ligase from Buchnera aphidicola subsp. Baizongia pistaciae (strain Bp).